Here is a 229-residue protein sequence, read N- to C-terminus: Prolactin (229 aa).

The N-terminal stretch at 1-30 is a signal peptide; it reads MDNKGWSLKGSLLFLLLLLSDLLLCKSVAS. Cysteines 34 and 41 form a disulfide. Residue Ser56 is modified to Phosphoserine. Asn61 carries an N-linked (GlcNAc...) asparagine glycan. Ser64 and Ser120 each carry phosphoserine. 2 cysteine pairs are disulfide-bonded: Cys88–Cys204 and Cys221–Cys229.

The protein belongs to the somatotropin/prolactin family. As to quaternary structure, interacts with PRLR.

It is found in the secreted. In terms of biological role, prolactin acts primarily on the mammary gland by promoting lactation. The protein is Prolactin (PRL) of Felis catus (Cat).